Consider the following 314-residue polypeptide: Thymidylate synthase (314 aa).

DUMP contacts are provided by residues Arg-32 and 176–177; that span reads RR. Residue Cys-196 is the Nucleophile of the active site. Residues 216–219, Asn-227, and 257–259 each bind dUMP; these read RSCD and HLY. Asp-219 provides a ligand contact to (6R)-5,10-methylene-5,6,7,8-tetrahydrofolate. Residue Ala-313 participates in (6R)-5,10-methylene-5,6,7,8-tetrahydrofolate binding.

This sequence belongs to the thymidylate synthase family. Bacterial-type ThyA subfamily. As to quaternary structure, homodimer.

It localises to the cytoplasm. The enzyme catalyses dUMP + (6R)-5,10-methylene-5,6,7,8-tetrahydrofolate = 7,8-dihydrofolate + dTMP. The protein operates within pyrimidine metabolism; dTTP biosynthesis. Its function is as follows. Catalyzes the reductive methylation of 2'-deoxyuridine-5'-monophosphate (dUMP) to 2'-deoxythymidine-5'-monophosphate (dTMP) while utilizing 5,10-methylenetetrahydrofolate (mTHF) as the methyl donor and reductant in the reaction, yielding dihydrofolate (DHF) as a by-product. This enzymatic reaction provides an intracellular de novo source of dTMP, an essential precursor for DNA biosynthesis. This Novosphingobium aromaticivorans (strain ATCC 700278 / DSM 12444 / CCUG 56034 / CIP 105152 / NBRC 16084 / F199) protein is Thymidylate synthase.